Reading from the N-terminus, the 95-residue chain is Protein TusB (95 aa).

This sequence belongs to the DsrH/TusB family. In terms of assembly, heterohexamer, formed by a dimer of trimers. The hexameric TusBCD complex contains 2 copies each of TusB, TusC and TusD. The TusBCD complex interacts with TusE.

The protein resides in the cytoplasm. Its function is as follows. Part of a sulfur-relay system required for 2-thiolation of 5-methylaminomethyl-2-thiouridine (mnm(5)s(2)U) at tRNA wobble positions. The sequence is that of Protein TusB from Escherichia coli O139:H28 (strain E24377A / ETEC).